The following is a 786-amino-acid chain: DENN domain-containing protein 1C (786 aa).

Positions 13-158 (FDWFFEAGCP…MDSSITVRSE (146 aa)) constitute a uDENN domain. The cDENN domain occupies 182–318 (SLPSIPENRN…VVSLLRLRLR (137 aa)). The dDENN domain maps to 320-398 (VALSPGEGVS…ESRLEKLNAG (79 aa)). Residues 401 to 405 (FSDQF) carry the FXDXF motif motif. Residues 481 to 553 (KDGDSGLQRG…LSPGDTQNPW (73 aa)) are disordered. Residues 527–541 (LKTEEGPSEPLRERS) are compositionally biased toward basic and acidic residues. Over residues 542-552 (PTLSPGDTQNP) the composition is skewed to polar residues. The residue at position 565 (S565) is a Phosphoserine. Positions 570 to 579 (DLLSEILDSL) match the Clathrin box motif. Disordered stretches follow at residues 653–741 (YSKN…QPPQ) and 762–786 (SHVS…CFEN). A compositionally biased stretch (low complexity) spans 657-675 (SCSQPFQQSPPSQGDPGPS). The span at 706–740 (LLVSTEPNSDAVQRLQSISSPSCSHSAENPRNQPP) shows a compositional bias: polar residues. The span at 770–786 (PQDKQPRVADLKKCFEN) shows a compositional bias: basic and acidic residues.

Exhibits low nucleotide-independent RAB35-binding activity. Interacts with clathrin heavy chain/CLTC and with AP2A2, but not with AP2B1.

It localises to the cytoplasm. The protein localises to the cytosol. It is found in the cytoplasmic vesicle. The protein resides in the clathrin-coated vesicle. Guanine nucleotide exchange factor (GEF) which may activate RAB8A, RAB13 and RAB35. Promotes the exchange of GDP to GTP, converting inactive GDP-bound Rab proteins into their active GTP-bound form. This chain is DENN domain-containing protein 1C (Dennd1c), found in Mus musculus (Mouse).